The chain runs to 449 residues: 3-phosphoshikimate 1-carboxyvinyltransferase (449 aa).

The segment at 1–30 (MSHDSSPQPLTAAPGAPLRGRLRPPGDKSI) is disordered. 3 residues coordinate 3-phosphoshikimate: Lys28, Ser29, and Arg33. A phosphoenolpyruvate-binding site is contributed by Lys28. 2 residues coordinate phosphoenolpyruvate: Gly101 and Arg129. 3-phosphoshikimate-binding residues include Ser175, Gln177, Asp330, and Lys357. Gln177 serves as a coordination point for phosphoenolpyruvate. The active-site Proton acceptor is the Asp330. 2 residues coordinate phosphoenolpyruvate: Arg361 and Arg405.

The protein belongs to the EPSP synthase family. In terms of assembly, monomer.

The protein localises to the cytoplasm. The enzyme catalyses 3-phosphoshikimate + phosphoenolpyruvate = 5-O-(1-carboxyvinyl)-3-phosphoshikimate + phosphate. It participates in metabolic intermediate biosynthesis; chorismate biosynthesis; chorismate from D-erythrose 4-phosphate and phosphoenolpyruvate: step 6/7. Catalyzes the transfer of the enolpyruvyl moiety of phosphoenolpyruvate (PEP) to the 5-hydroxyl of shikimate-3-phosphate (S3P) to produce enolpyruvyl shikimate-3-phosphate and inorganic phosphate. The protein is 3-phosphoshikimate 1-carboxyvinyltransferase of Methylobacterium radiotolerans (strain ATCC 27329 / DSM 1819 / JCM 2831 / NBRC 15690 / NCIMB 10815 / 0-1).